Consider the following 212-residue polypeptide: Histone H1.2 (212 aa).

The span at 1 to 17 (MSEAAPAAPAAAPPAEK) shows a compositional bias: low complexity. A disordered region spans residues 1 to 41 (MSEAAPAAPAAAPPAEKAPAKKKAAKKPAGVRRKASGPPVS). S2 carries the N-acetylserine modification. S2 carries the post-translational modification Phosphoserine. K17 is subject to N6-acetyllysine. Residues 20 to 35 (AKKKAAKKPAGVRRKA) show a composition bias toward basic residues. 3 positions are modified to N6-(2-hydroxyisobutyryl)lysine: K23, K26, and K27. K34 is subject to N6-(beta-hydroxybutyryl)lysine; alternate. K34 bears the N6-crotonyllysine; alternate mark. N6-methyllysine; alternate is present on K34. An H15 domain is found at 36–109 (SGPPVSELIT…GASGSFKLNK (74 aa)). The residue at position 46 (K46) is an N6-(2-hydroxyisobutyryl)lysine. K52 is subject to N6-(beta-hydroxybutyryl)lysine; alternate. K52 is modified (N6-(2-hydroxyisobutyryl)lysine; alternate). R54 carries the citrulline modification. N6-(2-hydroxyisobutyryl)lysine is present on K63. K64 is modified (N6-(beta-hydroxybutyryl)lysine; alternate). The residue at position 64 (K64) is an N6-crotonyllysine; alternate. Position 64 is an N6-(2-hydroxyisobutyryl)lysine; alternate (K64). K75 and K81 each carry N6-(2-hydroxyisobutyryl)lysine. N6-(beta-hydroxybutyryl)lysine; alternate is present on residues K85 and K90. An N6-crotonyllysine; alternate mark is found at K85, K90, and K97. 3 positions are modified to N6-(2-hydroxyisobutyryl)lysine; alternate: K85, K90, and K97. N6-succinyllysine; alternate is present on K97. Positions 98–212 (GTGASGSFKL…KAKKVAAKKK (115 aa)) are disordered. S104 carries the phosphoserine; by PKC modification. The residue at position 106 (K106) is an N6-(beta-hydroxybutyryl)lysine. Residues K110, K117, K121, K129, and K136 each carry the N6-(2-hydroxyisobutyryl)lysine modification. The span at 121–148 (KKAGAAKAKKPAGAAKKPKKATGAATPK) shows a compositional bias: low complexity. T146 is modified (phosphothreonine). K148 is modified (N6-(2-hydroxyisobutyryl)lysine). The span at 149–160 (KAAKKTPKKAKK) shows a compositional bias: basic residues. An N6-crotonyllysine; alternate mark is found at K159 and K168. K159 and K168 each carry N6-(2-hydroxyisobutyryl)lysine; alternate. The segment covering 169–212 (KVAKSPKKAKVTKPKKVKSASKAVKPKAAKPKVAKAKKVAAKKK) has biased composition (basic residues). Residue K186 is modified to N6-methyllysine; by EHMT1 and EHMT2. S187 is modified (ADP-ribosylserine). Residue K212 is modified to N6-(2-hydroxyisobutyryl)lysine.

Belongs to the histone H1/H5 family. As to quaternary structure, interacts with TSC22D1 isoform 2. In terms of processing, H1 histones are progressively phosphorylated during the cell cycle, becoming maximally phosphorylated during late G2 phase and M phase, and being dephosphorylated sharply thereafter. Crotonylation (Kcr) is specifically present in male germ cells and marks testis-specific genes in post-meiotic cells, including X-linked genes that escape sex chromosome inactivation in haploid cells. Crotonylation marks active promoters and enhancers and confers resistance to transcriptional repressors. It is also associated with post-meiotically activated genes on autosomes. Post-translationally, ADP-ribosylated on Ser-187 in response to DNA damage. In terms of processing, citrullination at Arg-54 (H1R54ci) by PADI4 takes place within the DNA-binding site of H1 and results in its displacement from chromatin and global chromatin decondensation, thereby promoting pluripotency and stem cell maintenance. Hydroxybutyrylation of histones is induced by starvation.

The protein localises to the nucleus. The protein resides in the chromosome. Histone H1 protein binds to linker DNA between nucleosomes forming the macromolecular structure known as the chromatin fiber. Histones H1 are necessary for the condensation of nucleosome chains into higher-order structured fibers. Also acts as a regulator of individual gene transcription through chromatin remodeling, nucleosome spacing and DNA methylation. This chain is Histone H1.2, found in Mus musculus (Mouse).